The primary structure comprises 348 residues: ATPase GET3 (348 aa).

An ATP-binding site is contributed by 26-33 (KGGVGKTT). D57 is an active-site residue. The ATP site is built by E241 and N268. Zn(2+)-binding residues include C280 and C283. 310–312 (PLL) serves as a coordination point for ATP.

This sequence belongs to the arsA ATPase family. In terms of assembly, homodimer. Component of the Golgi to ER traffic (GET) complex, which is composed of GET1, GET2 and GET3. Within the complex, GET1 and GET2 form a heterotetramer which is stabilized by phosphatidylinositol binding and which binds to the GET3 homodimer. Interacts with the chloride channel protein GEF1.

It is found in the cytoplasm. It localises to the endoplasmic reticulum. Its subcellular location is the golgi apparatus. In terms of biological role, ATPase required for the post-translational delivery of tail-anchored (TA) proteins to the endoplasmic reticulum. Recognizes and selectively binds the transmembrane domain of TA proteins in the cytosol. This complex then targets to the endoplasmic reticulum by membrane-bound receptors GET1 and GET2, where the tail-anchored protein is released for insertion. This process is regulated by ATP binding and hydrolysis. ATP binding drives the homodimer towards the closed dimer state, facilitating recognition of newly synthesized TA membrane proteins. ATP hydrolysis is required for insertion. Subsequently, the homodimer reverts towards the open dimer state, lowering its affinity for the GET1-GET2 receptor, and returning it to the cytosol to initiate a new round of targeting. Cooperates with the HDEL receptor ERD2 to mediate the ATP-dependent retrieval of resident ER proteins that contain a C-terminal H-D-E-L retention signal from the Golgi to the ER. Involved in low-level resistance to the oxyanions arsenite and arsenate, and in heat tolerance. This is ATPase GET3 from Debaryomyces hansenii (strain ATCC 36239 / CBS 767 / BCRC 21394 / JCM 1990 / NBRC 0083 / IGC 2968) (Yeast).